A 161-amino-acid chain; its full sequence is Transcription initiation factor TFIID subunit 12 (161 aa).

The tract at residues 15–55 is disordered; it reads FSSIKPEPASTPPQGSMANSTAVVKIPGTPGAGGRLSPENN. A Glycyl lysine isopeptide (Lys-Gly) (interchain with G-Cter in SUMO2) cross-link involves residue K19. Positions 26-36 are enriched in polar residues; it reads PPQGSMANSTA. A Phosphothreonine modification is found at T43. S51 carries the phosphoserine modification. Phosphothreonine is present on T59. The region spanning 59–126 is the Histone-fold domain; that stretch reads TKKKLQDLVR…QLHLERQWNM (68 aa).

The protein belongs to the TAF12 family. In terms of assembly, component of the TFIID basal transcription factor complex, composed of TATA-box-binding protein TBP, and a number of TBP-associated factors (TAFs), including TAF1, TAF2, TAF3, TAF4, TAF5, TAF6, TAF7, TAF8, TAF9, TAF10, TAF11, TAF12 and TAF13. Component of the TATA-binding protein-free TAF complex (TFTC), the PCAF histone acetylase complex and the STAGA transcription coactivator-HAT complex. Component of the PCAF complex, at least composed of TADA2L/ADA2, TADA3L/ADA3, TAF5L/PAF65-beta, SUPT3H, TAF6L, TAF9, TAF10, TAF12 and TRRAP. Component of the STAGA transcription coactivator-HAT complex, at least composed of SUPT3H, GCN5L2, TAF5L, TAF6L, STAF65-gamma/SUPT7L, TADA3L, TAD1L, TAF10, TAF12, TRRAP and TAF9. Interacts with ATF7 (via the transactivation domain); the interaction is prevented by sumoylation of ATF7. Interacts with TBP; the interaction is direct. Interacts with TAF10; the interaction is direct. Interacts with ATF7, promoting transactivation by ATF7. As to quaternary structure, does not promote the transactivation of ATF7. Ubiquitous.

The protein resides in the nucleus. Functionally, the TFIID basal transcription factor complex plays a major role in the initiation of RNA polymerase II (Pol II)-dependent transcription. TFIID recognizes and binds promoters with or without a TATA box via its subunit TBP, a TATA-box-binding protein, and promotes assembly of the pre-initiation complex (PIC). The TFIID complex consists of TBP and TBP-associated factors (TAFs), including TAF1, TAF2, TAF3, TAF4, TAF5, TAF6, TAF7, TAF8, TAF9, TAF10, TAF11, TAF12 and TAF13. Component of the TATA-binding protein-free TAF complex (TFTC), the PCAF histone acetylase complex and the STAGA transcription coactivator-HAT complex. The chain is Transcription initiation factor TFIID subunit 12 from Homo sapiens (Human).